The following is a 419-amino-acid chain: UDP-N-acetylglucosamine 1-carboxyvinyltransferase (419 aa).

Residue 22-23 coordinates phosphoenolpyruvate; it reads KN. Arginine 91 provides a ligand contact to UDP-N-acetyl-alpha-D-glucosamine. Cysteine 115 functions as the Proton donor in the catalytic mechanism. Cysteine 115 bears the 2-(S-cysteinyl)pyruvic acid O-phosphothioketal mark. UDP-N-acetyl-alpha-D-glucosamine-binding positions include 120–124, 160–163, aspartate 305, and valine 327; these read RPVDL and KVSV.

It belongs to the EPSP synthase family. MurA subfamily.

The protein localises to the cytoplasm. It carries out the reaction phosphoenolpyruvate + UDP-N-acetyl-alpha-D-glucosamine = UDP-N-acetyl-3-O-(1-carboxyvinyl)-alpha-D-glucosamine + phosphate. It participates in cell wall biogenesis; peptidoglycan biosynthesis. In terms of biological role, cell wall formation. Adds enolpyruvyl to UDP-N-acetylglucosamine. This Salmonella dublin (strain CT_02021853) protein is UDP-N-acetylglucosamine 1-carboxyvinyltransferase.